Reading from the N-terminus, the 524-residue chain is Serine/threonine-protein kinase PAK 2 (524 aa).

Residues 1-81 are disordered; that stretch reads MSDNGELEDK…PEISPPSDFE (81 aa). Ser-2 carries the post-translational modification N-acetylserine. 4 positions are modified to phosphoserine: Ser-2, Ser-20, Ser-55, and Ser-58. Position 60 is a phosphothreonine (Thr-60). Position 62 is an N6-acetyllysine (Lys-62). Phosphoserine is present on Ser-64. Residues 67–81 show a composition bias toward basic and acidic residues; it reads KEKERPEISPPSDFE. The tract at residues 69–112 is GTPase-binding; sequence KERPEISPPSDFEHTIHVGFDAVTGEFTGMPEQWARLLQTSNIT. The interval 69 to 137 is autoregulatory region; that stretch reads KERPEISPPS…KFYDSNTVKQ (69 aa). The region spanning 74-87 is the CRIB domain; that stretch reads ISPPSDFEHTIHVG. Lys-128 is modified (N6-acetyllysine). The residue at position 134 (Thr-134) is a Phosphothreonine. Phosphotyrosine is present on Tyr-139. Ser-141 carries the phosphoserine modification. Residues 142-188 form a disordered region; sequence FTPPEKDGFPSGTPALNTKGSETSAVVTEEDDDDEDAAPPVIAPRPD. Thr-143 carries the phosphothreonine modification. Position 152 is a phosphoserine (Ser-152). A phosphothreonine mark is found at Thr-154, Thr-159, and Thr-169. The span at 155–167 shows a compositional bias: polar residues; sequence PALNTKGSETSAV. A compositionally biased stretch (acidic residues) spans 169–178; that stretch reads TEEDDDDEDA. Residue Ser-197 is modified to Phosphoserine. The segment at 204-228 is disordered; that stretch reads APVGDSNVDSGAKSSDKQKKKAKMT. Positions 245–251 match the Nuclear localization signal motif; sequence PKKKYTR. In terms of domain architecture, Protein kinase spans 249–499; that stretch reads YTRYEKIGQG…SAKELLQHPF (251 aa). Residues 255–263 and Lys-278 each bind ATP; that span reads IGQGASGTV. The Proton acceptor role is filled by Arg-367. Thr-402 carries the phosphothreonine; by autocatalysis modification.

It belongs to the protein kinase superfamily. STE Ser/Thr protein kinase family. STE20 subfamily. As to quaternary structure, interacts tightly with GTP-bound but not GDP-bound CDC42/p21 and RAC1. Interacts with SH3MD4. Interacts with SCRIB. Interacts with ARHGEF7 and GIT1. PAK-2p34 interacts with ARHGAP10. Interacts with RAC1. In terms of processing, full-length PAK2 is autophosphorylated when activated by CDC42/p21. Following cleavage, both peptides, PAK-2p27 and PAK-2p34, become highly autophosphorylated. Autophosphorylation of PAK-2p27 can occur in the absence of any effectors and is dependent on phosphorylation of Thr-402, because PAK-2p27 is acting as an exogenous substrate. Post-translationally, during apoptosis proteolytically cleaved by caspase-3 or caspase-3-like proteases to yield active PAK-2p34. Ubiquitinated, leading to its proteasomal degradation.

It localises to the cytoplasm. It is found in the nucleus. The protein resides in the perinuclear region. Its subcellular location is the membrane. It carries out the reaction L-seryl-[protein] + ATP = O-phospho-L-seryl-[protein] + ADP + H(+). It catalyses the reaction L-threonyl-[protein] + ATP = O-phospho-L-threonyl-[protein] + ADP + H(+). Activated by binding small G proteins. Binding of GTP-bound CDC42 or RAC1 to the autoregulatory region releases monomers from the autoinhibited dimer, enables phosphorylation of Thr-402 and allows the kinase domain to adopt an active structure. Following caspase cleavage, autophosphorylated PAK-2p34 is constitutively active. Functionally, serine/threonine protein kinase that plays a role in a variety of different signaling pathways including cytoskeleton regulation, cell motility, cell cycle progression, apoptosis or proliferation. Acts as a downstream effector of the small GTPases CDC42 and RAC1. Activation by the binding of active CDC42 and RAC1 results in a conformational change and a subsequent autophosphorylation on several serine and/or threonine residues. Full-length PAK2 stimulates cell survival and cell growth. Phosphorylates MAPK4 and MAPK6 and activates the downstream target MAPKAPK5, a regulator of F-actin polymerization and cell migration. Phosphorylates JUN and plays an important role in EGF-induced cell proliferation. Phosphorylates many other substrates including histone H4 to promote assembly of H3.3 and H4 into nucleosomes, BAD, ribosomal protein S6, or MBP. Phosphorylates CASP7, thereby preventing its activity. Additionally, associates with ARHGEF7 and GIT1 to perform kinase-independent functions such as spindle orientation control during mitosis. On the other hand, apoptotic stimuli such as DNA damage lead to caspase-mediated cleavage of PAK2, generating PAK-2p34, an active p34 fragment that translocates to the nucleus and promotes cellular apoptosis involving the JNK signaling pathway. Caspase-activated PAK2 phosphorylates MKNK1 and reduces cellular translation. This chain is Serine/threonine-protein kinase PAK 2 (Pak2), found in Mus musculus (Mouse).